The primary structure comprises 353 residues: Dihydroorotate dehydrogenase (quinone) (353 aa).

Residues 67–71 (AGFDK) and Thr-91 contribute to the FMN site. Substrate is bound at residue Lys-71. 116-120 (NRMGF) serves as a coordination point for substrate. Residues Asn-144 and Asn-177 each coordinate FMN. Asn-177 provides a ligand contact to substrate. Residue Ser-180 is the Nucleophile of the active site. Asn-182 serves as a coordination point for substrate. Residues Lys-215 and Thr-243 each coordinate FMN. 244–245 (NT) is a binding site for substrate. FMN is bound by residues Gly-264, Gly-293, and 314 to 315 (YT).

The protein belongs to the dihydroorotate dehydrogenase family. Type 2 subfamily. In terms of assembly, monomer. The cofactor is FMN.

It is found in the cell membrane. It catalyses the reaction (S)-dihydroorotate + a quinone = orotate + a quinol. It participates in pyrimidine metabolism; UMP biosynthesis via de novo pathway; orotate from (S)-dihydroorotate (quinone route): step 1/1. Its function is as follows. Catalyzes the conversion of dihydroorotate to orotate with quinone as electron acceptor. The polypeptide is Dihydroorotate dehydrogenase (quinone) (Gloeobacter violaceus (strain ATCC 29082 / PCC 7421)).